Here is a 272-residue protein sequence, read N- to C-terminus: EID1-like F-box protein 3 (272 aa).

The F-box domain maps to 29–81; sequence SGKSGIENERVLVLVFESISWDIHTLCTIASLSRRFCAIARRILWRRLCVNRA.

The chain is EID1-like F-box protein 3 (EDL3) from Arabidopsis thaliana (Mouse-ear cress).